The chain runs to 274 residues: Rhamnulose-1-phosphate aldolase (274 aa).

Glutamate 117 is a catalytic residue. Zn(2+) is bound by residues histidine 141, histidine 143, and histidine 212.

Belongs to the aldolase class II family. RhaD subfamily. Homotetramer. It depends on Zn(2+) as a cofactor.

It localises to the cytoplasm. The catalysed reaction is L-rhamnulose 1-phosphate = (S)-lactaldehyde + dihydroxyacetone phosphate. It participates in carbohydrate degradation; L-rhamnose degradation; glycerone phosphate from L-rhamnose: step 3/3. Catalyzes the reversible cleavage of L-rhamnulose-1-phosphate to dihydroxyacetone phosphate (DHAP) and L-lactaldehyde. This is Rhamnulose-1-phosphate aldolase from Escherichia coli O17:K52:H18 (strain UMN026 / ExPEC).